Here is a 290-residue protein sequence, read N- to C-terminus: Putative neuropeptide Y receptor type 6 (290 aa).

The Extracellular segment spans residues 1-39 (MEVSLNHPASNTTSTKNNNSAFFYFESCQPPSPALLLLC). N-linked (GlcNAc...) asparagine glycosylation is present at asparagine 11. Residues 40-60 (IAYTVVLIVGLFGNLSLIIII) traverse the membrane as a helical segment. Residues 61–83 (FKKQRKAQNFTSILIANLSLSDT) are Cytoplasmic-facing. A helical transmembrane segment spans residues 84-104 (LVCVMCIHFTIIYTLMDHWIF). Topologically, residues 105 to 111 (GDTMCRL) are extracellular. Cysteine 109 and cysteine 196 are oxidised to a cystine. The chain crosses the membrane as a helical span at residues 112 to 132 (TSYVQSVSISVSIFSLVFTAV). Residues 133 to 150 (ERYQLIVNPRGWKPSVTH) lie on the Cytoplasmic side of the membrane. Residues 151–171 (AYWGITLIWLFSLLLSIPFFL) form a helical membrane-spanning segment. Residues 172 to 206 (SYHLTDEPFRNLSLPTDLYTHQVACVENWPSKKDR) lie on the Extracellular side of the membrane. The helical transmembrane segment at 207-227 (LLFTTSLFLLQYFVPLGFILI) threads the bilayer. Over 228–258 (CYLKIVICLRRRNAKVDKKKENEGRLNENKR) the chain is Cytoplasmic. The chain crosses the membrane as a helical span at residues 259-279 (INTMLISIVVTFGACWLPRIS). Over 280–290 (SMSSLTGIMRC) the chain is Extracellular.

The protein belongs to the G-protein coupled receptor 1 family. As to expression, expressed in heart, skeletal muscle, gastrointestinal tissues, spleen, brain and adrenal glands.

Its subcellular location is the membrane. When expressed, is unable to bind pancreatic polypeptide (PP), neuropeptide Y (NPY), or peptide YY (PYY), suggesting that either it is functionally inactive or that it may have acquired a pancreatic polypeptide-independent function. The chain is Putative neuropeptide Y receptor type 6 (NPY6R) from Homo sapiens (Human).